Consider the following 1235-residue polypeptide: N-acetylglucosamine-1-phosphotransferase subunits alpha/beta (1235 aa).

Residues 22 to 42 (VCFVGVVVTIVSAFQFGEVVL) form a helical membrane-spanning segment. Asn83, Asn114, Asn148, and Asn179 each carry an N-linked (GlcNAc...) asparagine glycan. Cystine bridges form between Cys438/Cys461, Cys452/Cys468, Cys505/Cys528, and Cys519/Cys535. 2 LNR repeats span residues 438 to 473 (CAEG…GNTA) and 505 to 545 (CNQG…ELYK). Ca(2+) is bound by residues Asp449, Asp464, Asp467, Asp516, Asp531, and Asp534. N-linked (GlcNAc...) asparagine glycans are attached at residues Asn614 and Asn729. The 125-residue stretch at 699–823 (NISLLPKEAQ…AQPTLGVTVS (125 aa)) folds into the DMAP1-binding domain. Disordered regions lie at residues 751–783 (QART…HRSE) and 830–850 (LIVP…AEGN). Residues 837–848 (HLPKEEESDRAE) show a composition bias toward basic and acidic residues. The region spanning 984–1019 (VQPLNISQVFHEVDTDQSGVLSDREIRTLATRIHDL) is the EF-hand domain. N-linked (GlcNAc...) asparagine glycosylation occurs at Asn988. Positions 997, 999, 1001, and 1008 each coordinate Ca(2+). N-linked (GlcNAc...) asparagine glycosylation is present at Asn1108. The chain crosses the membrane as a helical span at residues 1194 to 1214 (VLATLIIFTIFSFFAEQIIAL).

The protein belongs to the stealth family. Hexamer of two alpha, two beta and two gamma (GNPTG) subunits; disulfide-linked. The alpha and/or the beta subunits of the enzyme constitute the catalytic subunits. Interacts with LYSET; facilitates proper localization of GNPTAB. In terms of processing, the alpha- and beta-subunits are generated by a proteolytic cleavage by MBTPS1 protease at the Lys-907-Asp-908 bond.

Its subcellular location is the golgi apparatus membrane. The enzyme catalyses N(4)-[alpha-D-mannosyl-(1-&gt;2)-alpha-D-mannosyl-(glycan)]-L-asparaginyl-[protein] + UDP-N-acetyl-alpha-D-glucosamine = N(4)-[6-(N-acetyl-alpha-D-glucosaminyl-1-phospho)-alpha-D-mannosyl-(1-&gt;2)-alpha-D-mannosyl-(glycan)]-L-asparaginyl-[protein] + UMP + H(+). Functionally, catalyzes the formation of mannose 6-phosphate (M6P) markers on high mannose type oligosaccharides in the Golgi apparatus. M6P residues are required to bind to the M6P receptors (MPR), which mediate the vesicular transport of lysosomal enzymes to the endosomal/prelysosomal compartment. The chain is N-acetylglucosamine-1-phosphotransferase subunits alpha/beta (Gnptab) from Mus musculus (Mouse).